Here is a 160-residue protein sequence, read N- to C-terminus: MYTITKGPSKLVAQRRTGPTQQQVESRLGELLKCRQPVPPTALPAHLQPSAQTQGPWPLASSGPRLVFNRVNGRRPLTTSPSLEGTQETYTVAHEENVRFVSEAWQQVERQLDGGPADESGPRPVQYVESTPDPRLQNFVPIDLDEWWAQQFLAKITNCS.

N-acetylmethionine is present on methionine 1. A disordered region spans residues 1 to 22; it reads MYTITKGPSKLVAQRRTGPTQQ. An Omega-N-methylarginine modification is found at arginine 35. The interval 43–64 is disordered; that stretch reads LPAHLQPSAQTQGPWPLASSGP. Residue serine 61 is modified to Phosphoserine. Omega-N-methylarginine is present on arginine 65. Serine 82 is subject to Phosphoserine.

The protein belongs to the MCRIP family. Interacts with DDX6. Interacts with MCRIP1.

It is found in the cytoplasm. It localises to the stress granule. The protein localises to the nucleus. This is MAPK regulated corepressor interacting protein 2 (Mcrip2) from Mus musculus (Mouse).